We begin with the raw amino-acid sequence, 240 residues long: Phosphoribosylaminoimidazole-succinocarboxamide synthase (240 aa).

The protein belongs to the SAICAR synthetase family.

The catalysed reaction is 5-amino-1-(5-phospho-D-ribosyl)imidazole-4-carboxylate + L-aspartate + ATP = (2S)-2-[5-amino-1-(5-phospho-beta-D-ribosyl)imidazole-4-carboxamido]succinate + ADP + phosphate + 2 H(+). Its pathway is purine metabolism; IMP biosynthesis via de novo pathway; 5-amino-1-(5-phospho-D-ribosyl)imidazole-4-carboxamide from 5-amino-1-(5-phospho-D-ribosyl)imidazole-4-carboxylate: step 1/2. The chain is Phosphoribosylaminoimidazole-succinocarboxamide synthase from Limosilactobacillus fermentum (strain NBRC 3956 / LMG 18251) (Lactobacillus fermentum).